Reading from the N-terminus, the 248-residue chain is DNA repair protein RecO (248 aa).

The protein belongs to the RecO family.

Functionally, involved in DNA repair and RecF pathway recombination. The chain is DNA repair protein RecO from Thermoanaerobacter sp. (strain X514).